The sequence spans 470 residues: Chromosomal replication initiator protein DnaA (470 aa).

Positions 1 to 79 (MTDDTWGLLR…AVQRLAFKVA (79 aa)) are domain I, interacts with DnaA modulators. Positions 79–128 (AANSPTRPVQPTMSEAIEEPAPLQTTVVDQLGNQEGNTSVKSPPEDLQAA) are domain II. The tract at residues 129-350 (PLDPRFTFDS…GALTRLFAFA (222 aa)) is domain III, AAA+ region. 4 residues coordinate ATP: Gly-173, Gly-175, Lys-176, and Thr-177. The interval 351-470 (SLVGREIDMD…VEMLRRSLEA (120 aa)) is domain IV, binds dsDNA.

This sequence belongs to the DnaA family. In terms of assembly, oligomerizes as a right-handed, spiral filament on DNA at oriC.

It is found in the cytoplasm. Functionally, plays an essential role in the initiation and regulation of chromosomal replication. ATP-DnaA binds to the origin of replication (oriC) to initiate formation of the DNA replication initiation complex once per cell cycle. Binds the DnaA box (a 9 base pair repeat at the origin) and separates the double-stranded (ds)DNA. Forms a right-handed helical filament on oriC DNA; dsDNA binds to the exterior of the filament while single-stranded (ss)DNA is stabiized in the filament's interior. The ATP-DnaA-oriC complex binds and stabilizes one strand of the AT-rich DNA unwinding element (DUE), permitting loading of DNA polymerase. After initiation quickly degrades to an ADP-DnaA complex that is not apt for DNA replication. Binds acidic phospholipids. This Ruegeria sp. (strain TM1040) (Silicibacter sp.) protein is Chromosomal replication initiator protein DnaA.